Here is an 85-residue protein sequence, read N- to C-terminus: Large ribosomal subunit protein bL27 (85 aa).

The disordered stretch occupies residues 1–26; sequence MAHKKAGGSTRNGRDSESKRLGVKRF.

Belongs to the bacterial ribosomal protein bL27 family.

This is Large ribosomal subunit protein bL27 from Saccharophagus degradans (strain 2-40 / ATCC 43961 / DSM 17024).